A 1196-amino-acid polypeptide reads, in one-letter code: Contactin rig-6 (1196 aa).

The signal sequence occupies residues 1 to 19; it reads MMMLIRCISIFLLFGFVNA. N-linked (GlcNAc...) asparagine glycosylation is found at Asn-100 and Asn-195. Ig-like C2-type domains lie at 144–225 and 232–319; these read PQIS…ARNS and PPIL…CSLS. Disulfide bonds link Cys-169–Cys-220 and Cys-263–Cys-316. An N-linked (GlcNAc...) asparagine glycan is attached at Asn-343. Ig-like C2-type domains lie at 355–438, 441–533, 539–626, and 631–730; these read PQIF…VKLR, PSIL…ALLT, PVFP…VQLI, and PSIK…EFVT. Cys-372 and Cys-420 are disulfide-bonded. N-linked (GlcNAc...) asparagine glycosylation is present at Asn-457. 2 disulfides stabilise this stretch: Cys-462–Cys-517 and Cys-562–Cys-610. Asn-644 carries an N-linked (GlcNAc...) asparagine glycan. A disulfide bond links Cys-653 and Cys-718. 4 Fibronectin type-III domains span residues 736 to 844, 849 to 961, 963 to 1057, and 1064 to 1168; these read SPIA…TAPG, TIDN…SHGE, KKVS…TKQH, and LIGK…LGSP. 8 N-linked (GlcNAc...) asparagine glycosylation sites follow: Asn-895, Asn-925, Asn-945, Asn-974, Asn-979, Asn-986, Asn-1002, and Asn-1092. The chain crosses the membrane as a helical span at residues 1174–1194; it reads TTGSSDVPIPSLLLLLLLLLW. Ser-1177 carries the GPI-anchor amidated serine lipid modification. A propeptide spans 1178–1196 (removed in mature form); it reads SDVPIPSLLLLLLLLLWRL.

It belongs to the immunoglobulin superfamily. Contactin family. Interacts with sax-7; the interaction establishes synaptic connections between neurons. As to expression, expressed in neurons including the I1 and I3 pharyngeal interneurons, NSM and VNC motor neurons, HSN and CAN neurons, the ALM and PLM touch receptor neurons and other unidentified head neurons. Expressed in AVG interneurons. Also expressed in somatic muscles, the excretory canal, the excretory cell and the hypodermis.

The protein resides in the cell membrane. It is found in the perikaryon. It localises to the cell projection. Its subcellular location is the axon. The protein localises to the synapse. The protein resides in the cytoplasm. Probable cell adhesion protein involved in patterning of the nervous system, playing a role in ALM and PLM touch receptor axon growth and VNC axon navigation. By associating with the transmembrane protein sax-7, mediates axonal interactions to establish synaptic connections between the AVG interneuron and the two PHC sensory neurons. Also required for non-neuronal cell migration in the excretory canal, regulating excretory canal elongation and excretory cell morphogenesis. Plays a role in regulating male mating behavior. The sequence is that of Contactin rig-6 from Caenorhabditis elegans.